Here is a 386-residue protein sequence, read N- to C-terminus: Tryptophan--tRNA ligase (386 aa).

The short motif at 82–90 (PSGPMHIGH) is the 'HIGH' region element. The 'KMSKS' region signature appears at 253 to 257 (KMSAS).

Belongs to the class-I aminoacyl-tRNA synthetase family.

The protein localises to the cytoplasm. The catalysed reaction is tRNA(Trp) + L-tryptophan + ATP = L-tryptophyl-tRNA(Trp) + AMP + diphosphate + H(+). The chain is Tryptophan--tRNA ligase from Pyrococcus horikoshii (strain ATCC 700860 / DSM 12428 / JCM 9974 / NBRC 100139 / OT-3).